A 533-amino-acid polypeptide reads, in one-letter code: Retinoid isomerohydrolase (533 aa).

Serine 2 is modified (N-acetylserine). Phosphothreonine occurs at positions 101 and 105. The S-palmitoyl cysteine; in membrane form moiety is linked to residue cysteine 112. Lysine 113 bears the N6-acetyllysine mark. Position 117 is a phosphoserine (serine 117). Histidine 180 contributes to the Fe cation binding site. A lipid anchor (S-palmitoyl cysteine; in membrane form) is attached at cysteine 231. Residues histidine 241 and histidine 313 each contribute to the Fe cation site. 2 S-palmitoyl cysteine; in membrane form lipidation sites follow: cysteine 329 and cysteine 330. Histidine 527 contacts Fe cation.

This sequence belongs to the carotenoid oxygenase family. Interacts with MYO7A; this mediates light-dependent intracellular transport of RPE65. The cofactor is Fe(2+). In terms of processing, palmitoylation by LRAT regulates ligand binding specificity; the palmitoylated form (membrane form) specifically binds all-trans-retinyl-palmitate, while the soluble unpalmitoylated form binds all-trans-retinol (vitamin A). In terms of tissue distribution, retinal pigment epithelium specific.

The protein localises to the cytoplasm. The protein resides in the cell membrane. Its subcellular location is the microsome membrane. The enzyme catalyses an all-trans-retinyl ester + H2O = 11-cis-retinol + a fatty acid + H(+). It catalyses the reaction lutein = (3R,3'S)-zeaxanthin. The catalysed reaction is all-trans-retinyl hexadecanoate + H2O = 11-cis-retinol + hexadecanoate + H(+). Its function is as follows. Critical isomerohydrolase in the retinoid cycle involved in regeneration of 11-cis-retinal, the chromophore of rod and cone opsins. Catalyzes the cleavage and isomerization of all-trans-retinyl fatty acid esters to 11-cis-retinol which is further oxidized by 11-cis retinol dehydrogenase to 11-cis-retinal for use as visual chromophore. Essential for the production of 11-cis retinal for both rod and cone photoreceptors. Also capable of catalyzing the isomerization of lutein to meso-zeaxanthin an eye-specific carotenoid. The soluble form binds vitamin A (all-trans-retinol), making it available for LRAT processing to all-trans-retinyl ester. The membrane form, palmitoylated by LRAT, binds all-trans-retinyl esters, making them available for IMH (isomerohydrolase) processing to all-cis-retinol. The soluble form is regenerated by transferring its palmitoyl groups onto 11-cis-retinol, a reaction catalyzed by LRAT. The polypeptide is Retinoid isomerohydrolase (RPE65) (Chlorocebus aethiops (Green monkey)).